The chain runs to 347 residues: UDP-3-O-acylglucosamine N-acyltransferase (347 aa).

Residue His-242 is the Proton acceptor of the active site.

The protein belongs to the transferase hexapeptide repeat family. LpxD subfamily. In terms of assembly, homotrimer.

The catalysed reaction is a UDP-3-O-[(3R)-3-hydroxyacyl]-alpha-D-glucosamine + a (3R)-hydroxyacyl-[ACP] = a UDP-2-N,3-O-bis[(3R)-3-hydroxyacyl]-alpha-D-glucosamine + holo-[ACP] + H(+). The protein operates within bacterial outer membrane biogenesis; LPS lipid A biosynthesis. Its function is as follows. Catalyzes the N-acylation of UDP-3-O-acylglucosamine using 3-hydroxyacyl-ACP as the acyl donor. Is involved in the biosynthesis of lipid A, a phosphorylated glycolipid that anchors the lipopolysaccharide to the outer membrane of the cell. The polypeptide is UDP-3-O-acylglucosamine N-acyltransferase (Dechloromonas aromatica (strain RCB)).